A 201-amino-acid chain; its full sequence is Small ribosomal subunit protein uS4 (201 aa).

Positions 27-47 (SKKNYPPGQHGNSRKRKTSEY) are disordered. The 61-residue stretch at 92–152 (GRLDNVVYRL…EKSKSMEVIA (61 aa)) folds into the S4 RNA-binding domain.

This sequence belongs to the universal ribosomal protein uS4 family. Part of the 30S ribosomal subunit. Contacts protein S5. The interaction surface between S4 and S5 is involved in control of translational fidelity.

In terms of biological role, one of the primary rRNA binding proteins, it binds directly to 16S rRNA where it nucleates assembly of the body of the 30S subunit. With S5 and S12 plays an important role in translational accuracy. The sequence is that of Small ribosomal subunit protein uS4 from Parabacteroides distasonis (strain ATCC 8503 / DSM 20701 / CIP 104284 / JCM 5825 / NCTC 11152).